A 500-amino-acid polypeptide reads, in one-letter code: Ribose import ATP-binding protein RbsA (500 aa).

ABC transporter domains follow at residues 3–239 (IEMK…VGRE) and 246–493 (DRTP…TGGV). An ATP-binding site is contributed by 35-42 (GENGAGKS).

It belongs to the ABC transporter superfamily. Ribose importer (TC 3.A.1.2.1) family. As to quaternary structure, the complex is composed of an ATP-binding protein (RbsA), two transmembrane proteins (RbsC) and a solute-binding protein (RbsB).

The protein resides in the cell membrane. It catalyses the reaction D-ribose(out) + ATP + H2O = D-ribose(in) + ADP + phosphate + H(+). Functionally, part of the ABC transporter complex RbsABC involved in ribose import. Responsible for energy coupling to the transport system. This Lacticaseibacillus paracasei (strain ATCC 334 / BCRC 17002 / CCUG 31169 / CIP 107868 / KCTC 3260 / NRRL B-441) (Lactobacillus paracasei) protein is Ribose import ATP-binding protein RbsA.